The following is a 206-amino-acid chain: Protein Nef (206 aa).

Glycine 2 is lipidated: N-myristoyl glycine; by host. At serine 6 the chain carries Phosphoserine; by host. Residues 62–66 are acidic; interacts with host PACS1 and PACS2; stabilizes the interaction of NEF/MHC-I with host AP1M1; necessary for MHC-I internalization; sequence EESDE. The segment at 70 to 79 is SH3-binding; interaction with Src family tyrosine kinases; that stretch reads PVRPQVPLRP. Positions 73-76 match the PxxP; stabilizes the interaction of NEF/MHC-I with host AP1M1; necessary for MHC-I internalization motif; it reads PQVP. The tract at residues 109-125 is mediates dimerization, Nef-PTE1 interaction; that stretch reads EILDLWVYNTQGIFPDW. Residues 149-181 form a binding to ATP6V1H region; sequence VDPQEVEEDTEGETNSLLHPICQHGMEDPERQV. Residues 165–166 carry the Dileucine internalization motif; necessary for CD4 internalization motif; that stretch reads LL. The short motif at 175 to 176 is the Diacidic; necessary for CD4 internalization element; the sequence is ED.

It belongs to the lentivirus primate group Nef protein family. In terms of assembly, monomer; cytosolic form. Homodimer; membrane bound form. Interacts with Nef associated p21-activated kinase (PAK2); this interaction activates PAK2. Associates with the Nef-MHC-I-AP1 complex; this complex is required for MHC-I internalization. Interacts (via C-terminus) with host PI3-kinase. Interacts with host PACS1; this interaction seems to be weak. Interacts with host PACS2. Interacts with host LCK and MAPK3; these interactions inhibit the kinase activity of the latter. Interacts with host ATP6V1H; this interaction may play a role in CD4 endocytosis. Associates with the CD4-Nef-AP2 complex; this complex is required for CD4 internalization. Interacts with host AP2 subunit alpha and AP2 subunit sigma2. Interacts with TCR-zeta chain; this interaction up-regulates the Fas ligand (FasL) surface expression. Interacts with host HCK, LYN, and SRC; these interactions activate the Src family kinases. Interacts with MAP3K5; this interaction inhibits the Fas and TNFR-mediated death signals. Interacts with beta-COP and PTE1. Interacts with human RACK1; this increases Nef phosphorylation by PKC. Interacts with TP53; this interaction decreases the half-life of TP53, protecting the infected cell against p53-mediated apoptosis. Post-translationally, the virion-associated Nef proteins are cleaved by the viral protease to release the soluble C-terminal core protein. Nef is probably cleaved concomitantly with viral structural proteins on maturation of virus particles. In terms of processing, myristoylated. Phosphorylated on serine residues, probably by host PKCdelta and theta.

The protein localises to the host cell membrane. The protein resides in the virion. It localises to the secreted. Its subcellular location is the host Golgi apparatus membrane. In terms of biological role, factor of infectivity and pathogenicity, required for optimal virus replication. Alters numerous pathways of T-lymphocyte function and down-regulates immunity surface molecules in order to evade host defense and increase viral infectivity. Alters the functionality of other immunity cells, like dendritic cells, monocytes/macrophages and NK cells. Its function is as follows. In infected CD4(+) T-lymphocytes, down-regulates the surface MHC-I, mature MHC-II, CD4, CD28, CCR5 and CXCR4 molecules. Mediates internalization and degradation of host CD4 through the interaction of with the cytoplasmic tail of CD4, the recruitment of AP-2 (clathrin adapter protein complex 2), internalization through clathrin coated pits, and subsequent transport to endosomes and lysosomes for degradation. Diverts host MHC-I molecules to the trans-Golgi network-associated endosomal compartments by an endocytic pathway to finally target them for degradation. MHC-I down-regulation may involve AP-1 (clathrin adapter protein complex 1) or possibly Src family kinase-ZAP70/Syk-PI3K cascade recruited by PACS2. In consequence infected cells are masked for immune recognition by cytotoxic T-lymphocytes. Decreasing the number of immune receptors also prevents reinfection by more HIV particles (superinfection). Down-regulates host SERINC3 and SERINC5 thereby excluding these proteins from the viral particles. Virion infectivity is drastically higher when SERINC3 or SERINC5 are excluded from the viral envelope, because these host antiviral proteins impair the membrane fusion event necessary for subsequent virion penetration. Bypasses host T-cell signaling by inducing a transcriptional program nearly identical to that of anti-CD3 cell activation. Interaction with TCR-zeta chain up-regulates the Fas ligand (FasL). Increasing surface FasL molecules and decreasing surface MHC-I molecules on infected CD4(+) cells send attacking cytotoxic CD8+ T-lymphocytes into apoptosis. Functionally, plays a role in optimizing the host cell environment for viral replication without causing cell death by apoptosis. Protects the infected cells from apoptosis in order to keep them alive until the next virus generation is ready to strike. Inhibits the Fas and TNFR-mediated death signals by blocking MAP3K5/ASK1. Decreases the half-life of TP53, protecting the infected cell against p53-mediated apoptosis. Inhibits the apoptotic signals regulated by the Bcl-2 family proteins through the formation of a Nef/PI3-kinase/PAK2 complex that leads to activation of PAK2 and induces phosphorylation of host BAD. In terms of biological role, extracellular Nef protein targets CD4(+) T-lymphocytes for apoptosis by interacting with CXCR4 surface receptors. The protein is Protein Nef of Homo sapiens (Human).